The chain runs to 238 residues: 7-cyano-7-deazaguanine synthase (238 aa).

An ATP-binding site is contributed by 12–22 (FSGGQDSTTCL). Zn(2+) contacts are provided by cysteine 191, cysteine 200, cysteine 203, and cysteine 206.

Belongs to the QueC family. The cofactor is Zn(2+).

It carries out the reaction 7-carboxy-7-deazaguanine + NH4(+) + ATP = 7-cyano-7-deazaguanine + ADP + phosphate + H2O + H(+). The protein operates within purine metabolism; 7-cyano-7-deazaguanine biosynthesis. Catalyzes the ATP-dependent conversion of 7-carboxy-7-deazaguanine (CDG) to 7-cyano-7-deazaguanine (preQ(0)). The protein is 7-cyano-7-deazaguanine synthase of Shewanella oneidensis (strain ATCC 700550 / JCM 31522 / CIP 106686 / LMG 19005 / NCIMB 14063 / MR-1).